The primary structure comprises 492 residues: MWRGLSALVTRPASAPLRLCARCSTGAESLVPGSTIFALSSGQGRCAIAVIRTSGPASGLALRSLTALREPPPARSACLRLLRHPCSGEPLDRSLVLWFPGPQSFTGEDCMELHVHGGPAVVSGVLQALGSVPGLRPAKAGEFTRRAFAHGKLSLTEVEGLADLIHAETEAQRRQALRQLDGELSQLCQGWAKTLTKALAHVEAYIDFGEDDNLEEGVLEQVDRDVRALEVALSSHLRDARRGQRLRSGANVVVAGPPNAGKSSLVNLLSQKPVSIVSPEPGTTRDILETPVDLAGFPVLLSDTAGLREGAGAVEQEGVRRARQRLEQADIILGMLDASDLASSSSCSFLDTVVAPLVAQSHDSGRQRLLLLLNKSDLLSANAPASSTALPPHLLLSCHTGAGMDALLQALKTELAAVCGDPSTGPPLLTRARHQYHLQGCLDALGRFQLTTDLALAAEALRQARRQLSHLTGGGGTEEILDLIFQDFCVGK.

Residues Met-1–Cys-20 constitute a mitochondrion transit peptide. Arg-52, Glu-112, and Lys-152 together coordinate 5,10-methylenetetrahydrofolate. Positions Gly-249 to Ala-416 constitute a TrmE-type G domain. GTP-binding positions include Gly-256–Ser-263, Gly-282–Asp-286, Asp-303–Gly-306, and Asn-374–Asp-377. Asn-259 provides a ligand contact to K(+). Positions 263 and 284 each coordinate Mg(2+). Lys-492 contributes to the 5,10-methylenetetrahydrofolate binding site.

It belongs to the TRAFAC class TrmE-Era-EngA-EngB-Septin-like GTPase superfamily. TrmE GTPase family. Homodimer; forms a dimer in the presence of potassium. Interacts with MTO1; forms the GTPBP3-MTO1 complex composed of homodimers of GTPBP3 and MTO1. Requires K(+) as cofactor.

It localises to the mitochondrion. It carries out the reaction GTP + H2O = GDP + phosphate + H(+). Its function is as follows. GTPase component of the GTPBP3-MTO1 complex that catalyzes the 5-taurinomethyluridine (taum(5)U) modification at the 34th wobble position (U34) of mitochondrial tRNAs (mt-tRNAs), which plays a role in mt-tRNA decoding and mitochondrial translation. Taum(5)U formation on mammalian mt-tRNA requires the presence of both GTPBP3-mediated GTPase activity and MTO1 catalytic activity. The sequence is that of 5-taurinomethyluridine-[tRNA] synthase subunit GTPB3, mitochondrial from Rattus norvegicus (Rat).